Consider the following 379-residue polypeptide: RIB43A-like with coiled-coils protein 1 (379 aa).

Residues 1–21 (MYNIKQSTDTKEAAAIEARRN) form a disordered region. Residues 8–21 (TDTKEAAAIEARRN) are compositionally biased toward basic and acidic residues. Coiled-coil stretches lie at residues 82-111 (KEEADRTRQLAKKVQEFREQKQQLKNGREF) and 216-304 (NANK…QAEK).

Belongs to the RIB43A family. As to quaternary structure, microtubule inner protein component of sperm flagellar doublet microtubules.

Its subcellular location is the cytoplasm. It is found in the cytoskeleton. The protein resides in the flagellum axoneme. In Homo sapiens (Human), this protein is RIB43A-like with coiled-coils protein 1 (RIBC1).